Reading from the N-terminus, the 684-residue chain is Glycine--tRNA ligase beta subunit (684 aa).

The protein belongs to the class-II aminoacyl-tRNA synthetase family. As to quaternary structure, tetramer of two alpha and two beta subunits.

The protein localises to the cytoplasm. The enzyme catalyses tRNA(Gly) + glycine + ATP = glycyl-tRNA(Gly) + AMP + diphosphate. In Ectopseudomonas mendocina (strain ymp) (Pseudomonas mendocina), this protein is Glycine--tRNA ligase beta subunit.